The chain runs to 248 residues: Granzyme F (248 aa).

An N-terminal signal peptide occupies residues methionine 1–alanine 18. A propeptide spanning residues glutamate 19–glutamate 20 is cleaved from the precursor. The Peptidase S1 domain maps to isoleucine 21–lysine 246. Cysteine 50 and cysteine 66 form a disulfide bridge. Histidine 65 acts as the Charge relay system in catalysis. N-linked (GlcNAc...) asparagine glycosylation is present at asparagine 106. Catalysis depends on aspartate 109, which acts as the Charge relay system. 2 cysteine pairs are disulfide-bonded: cysteine 143–cysteine 210 and cysteine 175–cysteine 189. N-linked (GlcNAc...) asparagine glycosylation is present at asparagine 154. The Charge relay system role is filled by serine 204. Asparagine 223 carries N-linked (GlcNAc...) asparagine glycosylation.

The protein belongs to the peptidase S1 family. Granzyme subfamily.

The protein localises to the cytolytic granule. Its function is as follows. This enzyme is probably necessary for target cell lysis in cell-mediated immune responses. The chain is Granzyme F (Gzmf) from Mus musculus (Mouse).